The following is a 122-amino-acid chain: Large ribosomal subunit protein uL14 (122 aa).

The protein belongs to the universal ribosomal protein uL14 family. Part of the 50S ribosomal subunit. Forms a cluster with proteins L3 and L19. In the 70S ribosome, L14 and L19 interact and together make contacts with the 16S rRNA in bridges B5 and B8.

Binds to 23S rRNA. Forms part of two intersubunit bridges in the 70S ribosome. This chain is Large ribosomal subunit protein uL14, found in Salinibacter ruber (strain DSM 13855 / M31).